A 229-amino-acid chain; its full sequence is 2-C-methyl-D-erythritol 4-phosphate cytidylyltransferase (229 aa).

It belongs to the IspD/TarI cytidylyltransferase family. IspD subfamily.

It catalyses the reaction 2-C-methyl-D-erythritol 4-phosphate + CTP + H(+) = 4-CDP-2-C-methyl-D-erythritol + diphosphate. It participates in isoprenoid biosynthesis; isopentenyl diphosphate biosynthesis via DXP pathway; isopentenyl diphosphate from 1-deoxy-D-xylulose 5-phosphate: step 2/6. Functionally, catalyzes the formation of 4-diphosphocytidyl-2-C-methyl-D-erythritol from CTP and 2-C-methyl-D-erythritol 4-phosphate (MEP). The sequence is that of 2-C-methyl-D-erythritol 4-phosphate cytidylyltransferase from Neisseria gonorrhoeae (strain ATCC 700825 / FA 1090).